The sequence spans 494 residues: Tripartite motif-containing protein 5 (494 aa).

Residue A2 is modified to N-acetylalanine. The segment at 15 to 59 (CPICLELLTEPLSLDCGHSFCQACITANHKESTLHQGERSCPLCR) adopts an RING-type zinc-finger fold. S86 is modified (phosphoserine). Residues 91–132 (QKVDHCARHGEKLLLFCQQDGNVICWLCERSQEHRGHHTFLV) form a B box-type zinc finger. Residues C96, H99, C118, and H124 each coordinate Zn(2+). The stretch at 132–223 (VEEVAEKYQG…RLVQSESDMV (92 aa)) forms a coiled coil. Residues 186 to 199 (FKQLRDILDCEESK) form a required for interaction with GABARAP and for autophagy region. A B30.2/SPRY domain is found at 280–494 (PDLKGMLQAF…LPMTLCSPSS (215 aa)).

The protein belongs to the TRIM/RBCC family. As to quaternary structure, can form homodimers and homotrimers. In addition to lower-order dimerization, also exhibits a higher-order multimerization and both low- and high-order multimerizations are essential for its restriction activity. Interacts with BTBD1 and BTBD2. Interacts with PSMC4, PSMC5, PSMD7 and HSPA8/HSC70. Interacts (via B30.2/SPRY domain) with HSPA1A/B. Interacts with PSMC2, MAP3K7/TAK1, TAB2 and TAB3. Interacts with SQSTM1. Interacts with TRIM6 and TRIM34. Interacts with ULK1 (phosphorylated form), GABARAP, GABARAPL1, GABARAPL2, MAP1LC3A, MAP1LC3C and BECN1. In terms of processing, degraded in a proteasome-independent fashion in the absence of viral infection but in a proteasome-dependent fashion following exposure to restriction sensitive virus. Autoubiquitinated in a RING finger- and UBE2D2-dependent manner. Monoubiquitinated by TRIM21. Deubiquitinated by Yersinia YopJ. Ubiquitination may not lead to proteasomal degradation.

It localises to the cytoplasm. Its subcellular location is the nucleus. The enzyme catalyses S-ubiquitinyl-[E2 ubiquitin-conjugating enzyme]-L-cysteine + [acceptor protein]-L-lysine = [E2 ubiquitin-conjugating enzyme]-L-cysteine + N(6)-ubiquitinyl-[acceptor protein]-L-lysine.. The protein operates within protein modification; protein ubiquitination. In terms of biological role, capsid-specific restriction factor that prevents infection from non-host-adapted retroviruses. Blocks viral replication early in the life cycle, after viral entry but before reverse transcription. In addition to acting as a capsid-specific restriction factor, also acts as a pattern recognition receptor that activates innate immune signaling in response to the retroviral capsid lattice. Binding to the viral capsid triggers its E3 ubiquitin ligase activity, and in concert with the heterodimeric ubiquitin conjugating enzyme complex UBE2V1-UBE2N (also known as UBC13-UEV1A complex) generates 'Lys-63'-linked polyubiquitin chains, which in turn are catalysts in the autophosphorylation of the MAP3K7/TAK1 complex (includes TAK1, TAB2, and TAB3). Activation of the MAP3K7/TAK1 complex by autophosphorylation results in the induction and expression of NF-kappa-B and MAPK-responsive inflammatory genes, thereby leading to an innate immune response in the infected cell. Plays a role in regulating autophagy through activation of autophagy regulator BECN1 by causing its dissociation from its inhibitors BCL2 and TAB2. The chain is Tripartite motif-containing protein 5 (TRIM5) from Cebuella pygmaea (Pygmy marmoset).